Consider the following 361-residue polypeptide: DNA double-strand break repair protein Mre11 (361 aa).

Mn(2+) is bound by residues aspartate 7, histidine 9, aspartate 48, and asparagine 83. The Proton donor role is filled by histidine 84. Mn(2+) is bound by residues histidine 176, histidine 204, and histidine 206.

The protein belongs to the MRE11/RAD32 family. Homodimer. Forms a heterotetramer composed of two Mre11 subunits and two Rad50 subunits. Requires Mn(2+) as cofactor.

Its activity is regulated as follows. Nuclease activity is regulated by Rad50. Its function is as follows. Part of the Rad50/Mre11 complex, which is involved in the early steps of DNA double-strand break (DSB) repair. The complex may facilitate opening of the processed DNA ends to aid in the recruitment of HerA and NurA. Mre11 binds to DSB ends and has both double-stranded 3'-5' exonuclease activity and single-stranded endonuclease activity. The polypeptide is DNA double-strand break repair protein Mre11 (Nanoarchaeum equitans (strain Kin4-M)).